The following is a 617-amino-acid chain: Phosphomethylpyrimidine synthase (617 aa).

Residues Asn-230, Met-259, Tyr-288, His-324, 344 to 346 (SRG), 385 to 388 (DGLR), and Glu-424 contribute to the substrate site. Position 428 (His-428) interacts with Zn(2+). Residue Tyr-451 coordinates substrate. His-492 serves as a coordination point for Zn(2+). Cys-572, Cys-575, and Cys-580 together coordinate [4Fe-4S] cluster.

The protein belongs to the ThiC family. As to quaternary structure, homodimer. The cofactor is [4Fe-4S] cluster.

It carries out the reaction 5-amino-1-(5-phospho-beta-D-ribosyl)imidazole + S-adenosyl-L-methionine = 4-amino-2-methyl-5-(phosphooxymethyl)pyrimidine + CO + 5'-deoxyadenosine + formate + L-methionine + 3 H(+). It functions in the pathway cofactor biosynthesis; thiamine diphosphate biosynthesis. In terms of biological role, catalyzes the synthesis of the hydroxymethylpyrimidine phosphate (HMP-P) moiety of thiamine from aminoimidazole ribotide (AIR) in a radical S-adenosyl-L-methionine (SAM)-dependent reaction. In Paracidovorax citrulli (strain AAC00-1) (Acidovorax citrulli), this protein is Phosphomethylpyrimidine synthase.